The chain runs to 227 residues: UPF0758 protein Spro_4842 (227 aa).

The 123-residue stretch at 105 to 227 (AMLNPRMTQH…CVSFAERGWL (123 aa)) folds into the MPN domain. Zn(2+) contacts are provided by H176, H178, and D189. Residues 176–189 (HNHPSGKAEPSHAD) carry the JAMM motif motif.

It belongs to the UPF0758 family. YicR subfamily.

The polypeptide is UPF0758 protein Spro_4842 (Serratia proteamaculans (strain 568)).